The sequence spans 101 residues: Conantokin-L (101 aa).

The signal sequence occupies residues 1 to 21; it reads MQLYTYLYLLVPLVTFHLILG. Positions 22–80 are excised as a propeptide; sequence TGTLDHGGALTERRSTDAIALKPEPVLLQKSSARSTDDNGNDRLTQMKRILKKRGNKAR. Residues glutamate 83, glutamate 84, glutamate 91, and glutamate 95 each carry the 4-carboxyglutamate modification. A divalent metal cation contacts are provided by glutamate 91 and glutamate 95. An Asparagine amide modification is found at asparagine 99.

The protein belongs to the conotoxin B superfamily. Requires Ca(2+) as cofactor. Mg(2+) is required as a cofactor. Expressed by the venom duct.

Its subcellular location is the secreted. Conantokins inhibit N-methyl-D-aspartate (NMDA) receptors. This toxin is far less potent as an anticonvulsant compound than conantokin-R. It induces sleep-like symptoms in mice. The sequence is that of Conantokin-L from Conus lynceus (Lynceus cone).